The primary structure comprises 525 residues: Glutamate--cysteine ligase (525 aa).

The protein belongs to the glutamate--cysteine ligase type 1 family. Type 1 subfamily.

The enzyme catalyses L-cysteine + L-glutamate + ATP = gamma-L-glutamyl-L-cysteine + ADP + phosphate + H(+). It participates in sulfur metabolism; glutathione biosynthesis; glutathione from L-cysteine and L-glutamate: step 1/2. In Vibrio vulnificus (strain YJ016), this protein is Glutamate--cysteine ligase.